A 226-amino-acid chain; its full sequence is MSLFVTFEGPEGSGKSTQARLLYESLHARRFPVILTREPGGTRIGDLIRRIVLDLQHTEMAPTAEMLLFSAARAQLVSEVIRPYLEQGGIVLCDRYADSTFAYQGYGLGRDLAELRVITAAATGGLRPDITFYLDISAAEGLERKRRKGARSTGQRGANNDEWNRLDARELEYHQRVEAGYRELIAADPERWRVLDARQSIEALAEQIGAIVEPYLASITRLETVL.

G9 to S16 provides a ligand contact to ATP.

This sequence belongs to the thymidylate kinase family.

It carries out the reaction dTMP + ATP = dTDP + ADP. Its function is as follows. Phosphorylation of dTMP to form dTDP in both de novo and salvage pathways of dTTP synthesis. The polypeptide is Thymidylate kinase (Roseiflexus sp. (strain RS-1)).